Consider the following 275-residue polypeptide: Large ribosomal subunit protein uL2 (275 aa).

A compositionally biased stretch (basic and acidic residues) spans 28–38; sequence RPYDGLLEKKS. Disordered stretches follow at residues 28 to 58 and 223 to 275; these read RPYD…GGGH and VAMN…RKAK. Basic residues predominate over residues 254 to 275; that stretch reads KGHKTRKNKRTDKLIVRRRKAK.

It belongs to the universal ribosomal protein uL2 family. As to quaternary structure, part of the 50S ribosomal subunit. Forms a bridge to the 30S subunit in the 70S ribosome.

One of the primary rRNA binding proteins. Required for association of the 30S and 50S subunits to form the 70S ribosome, for tRNA binding and peptide bond formation. It has been suggested to have peptidyltransferase activity; this is somewhat controversial. Makes several contacts with the 16S rRNA in the 70S ribosome. This chain is Large ribosomal subunit protein uL2, found in Chromohalobacter salexigens (strain ATCC BAA-138 / DSM 3043 / CIP 106854 / NCIMB 13768 / 1H11).